Here is a 964-residue protein sequence, read N- to C-terminus: Glycine dehydrogenase (decarboxylating) (964 aa).

Residues 1–11 (MNSTLQNQTKT) show a composition bias toward polar residues. A disordered region spans residues 1-21 (MNSTLQNQTKTNLEKVGTDPL). The residue at position 713 (Lys-713) is an N6-(pyridoxal phosphate)lysine.

The protein belongs to the GcvP family. In terms of assembly, the glycine cleavage system is composed of four proteins: P, T, L and H. Pyridoxal 5'-phosphate serves as cofactor.

It catalyses the reaction N(6)-[(R)-lipoyl]-L-lysyl-[glycine-cleavage complex H protein] + glycine + H(+) = N(6)-[(R)-S(8)-aminomethyldihydrolipoyl]-L-lysyl-[glycine-cleavage complex H protein] + CO2. Functionally, the glycine cleavage system catalyzes the degradation of glycine. The P protein binds the alpha-amino group of glycine through its pyridoxal phosphate cofactor; CO(2) is released and the remaining methylamine moiety is then transferred to the lipoamide cofactor of the H protein. This chain is Glycine dehydrogenase (decarboxylating), found in Leptospira interrogans serogroup Icterohaemorrhagiae serovar copenhageni (strain Fiocruz L1-130).